The sequence spans 722 residues: Neprilysin-1 (722 aa).

Residues 1 to 17 (MAVALLVALCVVSSRMA) form the signal peptide. Residues 32–722 (VCNSPVCQKA…MNPTHKCLLW (691 aa)) enclose the Peptidase M13 domain. Intrachain disulfides connect cysteine 33/cysteine 38, cysteine 56/cysteine 707, cysteine 64/cysteine 667, cysteine 120/cysteine 378, and cysteine 589/cysteine 719. N-linked (GlcNAc...) asparagine glycosylation is found at asparagine 100, asparagine 184, asparagine 207, and asparagine 424. Histidine 552 contributes to the Zn(2+) binding site. Glutamate 553 is an active-site residue. Histidine 556 contacts Zn(2+). N-linked (GlcNAc...) asparagine glycosylation is present at asparagine 609. Zn(2+) is bound at residue glutamate 614. The active-site Proton donor is aspartate 618.

Belongs to the peptidase M13 family. Zn(2+) serves as cofactor. Post-translationally, contains 5 disulfide bonds. Expressed by the venom gland.

Its subcellular location is the secreted. This Trittame loki (Brush-footed trapdoor spider) protein is Neprilysin-1.